Consider the following 243-residue polypeptide: Beta-glucanase (243 aa).

The first 27 residues, 1–27 (MSYRVKRMLMLLVTGLFLSLSTFAASA), serve as a signal peptide directing secretion. The 215-residue stretch at 29 to 243 (AQTGGSFYEP…SLHWVRYTKR (215 aa)) folds into the GH16 domain. Residues C61 and C90 are joined by a disulfide bond. Catalysis depends on E134, which acts as the Nucleophile. Residue E138 is the Proton donor of the active site.

Belongs to the glycosyl hydrolase 16 family.

The catalysed reaction is Hydrolysis of (1-&gt;4)-beta-D-glucosidic linkages in beta-D-glucans containing (1-&gt;3)- and (1-&gt;4)-bonds.. This Bacillus licheniformis protein is Beta-glucanase (bg1).